The sequence spans 163 residues: Nucleotide-binding protein BcerKBAB4_1061 (163 aa).

Belongs to the YajQ family.

In terms of biological role, nucleotide-binding protein. This chain is Nucleotide-binding protein BcerKBAB4_1061, found in Bacillus mycoides (strain KBAB4) (Bacillus weihenstephanensis).